The sequence spans 225 residues: Superoxide dismutase [Mn], mitochondrial (225 aa).

A mitochondrion-targeting transit peptide spans 1–27 (MITAITRTALPRATLRTSLATMSTIRA). Mn(2+) is bound by residues His-53, His-101, Asp-187, and His-191.

Belongs to the iron/manganese superoxide dismutase family. It depends on Mn(2+) as a cofactor.

The protein resides in the mitochondrion. The protein localises to the cytoplasm. It carries out the reaction 2 superoxide + 2 H(+) = H2O2 + O2. Functionally, destroys radicals which are normally produced within the cells and which are toxic to biological systems. Destroys mitochondrial radicals produced by oxidative stress. Its function is as follows. Destroys cytoplasmic radicals produced in low copper environments; a condition which inactivates the cytoplasmic copper-dependent superoxide dismutase SOD1. The polypeptide is Superoxide dismutase [Mn], mitochondrial (Cryptococcus neoformans var. grubii serotype A (strain H99 / ATCC 208821 / CBS 10515 / FGSC 9487) (Filobasidiella neoformans var. grubii)).